A 298-amino-acid polypeptide reads, in one-letter code: Tyrosine recombinase XerD (298 aa).

Residues 3 to 88 (SSHNNLLQNF…AIRQFYKFLK (86 aa)) enclose the Core-binding (CB) domain. Residues 109–292 (SIPDYLTQDE…ANKTLREVHK (184 aa)) enclose the Tyr recombinase domain. Active-site residues include arginine 149, lysine 173, histidine 244, arginine 247, and histidine 270. Catalysis depends on tyrosine 279, which acts as the O-(3'-phospho-DNA)-tyrosine intermediate.

The protein belongs to the 'phage' integrase family. XerD subfamily. In terms of assembly, forms a cyclic heterotetrameric complex composed of two molecules of XerC and two molecules of XerD.

The protein resides in the cytoplasm. Functionally, site-specific tyrosine recombinase, which acts by catalyzing the cutting and rejoining of the recombining DNA molecules. The XerC-XerD complex is essential to convert dimers of the bacterial chromosome into monomers to permit their segregation at cell division. It also contributes to the segregational stability of plasmids. This is Tyrosine recombinase XerD from Leptospira interrogans serogroup Icterohaemorrhagiae serovar copenhageni (strain Fiocruz L1-130).